Here is a 156-residue protein sequence, read N- to C-terminus: Ribosome maturation factor RimP (156 aa).

It belongs to the RimP family.

It is found in the cytoplasm. In terms of biological role, required for maturation of 30S ribosomal subunits. The protein is Ribosome maturation factor RimP of Halalkalibacterium halodurans (strain ATCC BAA-125 / DSM 18197 / FERM 7344 / JCM 9153 / C-125) (Bacillus halodurans).